Consider the following 418-residue polypeptide: Hepatic and glial cell adhesion molecule (418 aa).

The first 33 residues, 1–33 (MKREREAPSRAFSALRLAPFVYLLLIQTEPLEG), serve as a signal peptide directing secretion. The Ig-like V-type domain maps to 34–141 (VNITSPVRLI…TGEKTINLTV (108 aa)). Residues 34 to 240 (VNITSPVRLI…VKITVYRRSS (207 aa)) are Extracellular-facing. Residues N35, N138, N167, and N189 are each glycosylated (N-linked (GlcNAc...) asparagine). Residues 148–234 (PQVLVASTTV…QGRSPPVKIT (87 aa)) form the Ig-like C2-type domain. C168 and C217 are joined by a disulfide. A helical transmembrane segment spans residues 241–261 (LYIILSTGGIFLLVTLVTVCA). Topologically, residues 262–418 (CWKPSKKSGK…DEAGPVEISA (157 aa)) are cytoplasmic. The tract at residues 271-418 (KKRKLEKQNS…DEAGPVEISA (148 aa)) is disordered. S280 carries the post-translational modification Phosphoserine. Residues 287–308 (SDDRLKPEADTLPRSGEQERKN) show a composition bias toward basic and acidic residues. A phosphoserine mark is found at S352 and S379. Over residues 385–400 (GSPGRSRSASRTLRTA) the composition is skewed to low complexity.

In terms of assembly, homodimer. Dimer formation occurs predominantly through cis interactions on the cell surface. Part of a complex containing MLC1, TRPV4, AQP4 and ATP1B1. Interacts with CLCN2. N-glycosylated.

Its subcellular location is the cytoplasm. The protein localises to the cell membrane. Functionally, involved in regulating cell motility and cell-matrix interactions. May inhibit cell growth through suppression of cell proliferation. In glia, associates and targets CLCN2 at astrocytic processes and myelinated fiber tracts where it may regulate transcellular chloride flux involved in neuron excitability. In Bos taurus (Bovine), this protein is Hepatic and glial cell adhesion molecule.